Reading from the N-terminus, the 260-residue chain is Taurine import ATP-binding protein TauB (260 aa).

The ABC transporter domain maps to 6-235 (AQQVSVVYAS…RYAHGEPMRS (230 aa)). An ATP-binding site is contributed by 40–47 (GASGCGKS).

Belongs to the ABC transporter superfamily. Taurine importer (TC 3.A.1.17.1) family. In terms of assembly, the complex is composed of two ATP-binding proteins (TauB), two transmembrane proteins (TauC) and a solute-binding protein (TauA).

Its subcellular location is the cell inner membrane. The enzyme catalyses taurine(out) + ATP + H2O = taurine(in) + ADP + phosphate + H(+). Part of the ABC transporter complex TauABC involved in taurine import. Responsible for energy coupling to the transport system. The chain is Taurine import ATP-binding protein TauB from Burkholderia pseudomallei (strain 1710b).